A 499-amino-acid chain; its full sequence is MSDQQLDQALQQEENSLIALRKEKLAAERAKGNAFPNDFRRDNYCDALQKQYADKTKEELAEAAIPVKVAGRIMLNRGSFMVIQDMTGRIQVYVNRKTLSEETLAAVKTWDMGDIIAAEGTLARSGKGDLYVEMTSVRLLTKSLRPLPDKHHGLTDTEQRYRQRYVDLIVNEDVRQTFRVRSQVIAHIRSFLMKRDFLEVETPMLQTIPGGAAAKPFETHHNALDMEMFLRIAPELYLKRLVVGGFEKVFEINRNFRNEGVSTRHNPEFTMLEFYQAYADYEDNMDLTEELFRELAQLVLGSTDVPYGDKVFHFGEPFVRLSVFDSILKYNPELTADDLNDIDKARAIAKKAGAKVLGFEGLGKLQVMIFEELVEHKLEQPHFITQYPFEVSPLARRNDDNPNVTDRFELFIGGREIANAYSELNDAEDQAERFMAQVADKDAGDDEAMHYDADFVRALEYGMPPTAGEGIGIDRLVMLLTNSPSIRDVILFPHMRPQA.

Mg(2+) is bound by residues glutamate 409 and glutamate 416.

It belongs to the class-II aminoacyl-tRNA synthetase family. Homodimer. It depends on Mg(2+) as a cofactor.

Its subcellular location is the cytoplasm. It catalyses the reaction tRNA(Lys) + L-lysine + ATP = L-lysyl-tRNA(Lys) + AMP + diphosphate. The polypeptide is Lysine--tRNA ligase (Pseudomonas fluorescens (strain Pf0-1)).